A 104-amino-acid polypeptide reads, in one-letter code: MIYSTTETIPGREIAEIKGVVTGNVVQSKHIGRDLMAGLKSIVGGEIRGYTEMMTEARNIAIQRMVEDAANLGADAVVGIRFTTSSIVDGSSEILAFGTAVKLL.

It belongs to the UPF0145 family.

This is UPF0145 protein VIBHAR_02090 from Vibrio campbellii (strain ATCC BAA-1116).